A 31-amino-acid polypeptide reads, in one-letter code: Photosystem II reaction center protein T (31 aa).

Residues 3–23 (ALVYTFLLVGTLGIIFFSIFF) traverse the membrane as a helical segment.

This sequence belongs to the PsbT family. As to quaternary structure, PSII is composed of 1 copy each of membrane proteins PsbA, PsbB, PsbC, PsbD, PsbE, PsbF, PsbH, PsbI, PsbJ, PsbK, PsbL, PsbM, PsbT, PsbY, PsbZ, Psb30/Ycf12, at least 3 peripheral proteins of the oxygen-evolving complex and a large number of cofactors. It forms dimeric complexes.

It localises to the plastid. The protein localises to the chloroplast thylakoid membrane. Functionally, found at the monomer-monomer interface of the photosystem II (PS II) dimer, plays a role in assembly and dimerization of PSII. PSII is a light-driven water plastoquinone oxidoreductase, using light energy to abstract electrons from H(2)O, generating a proton gradient subsequently used for ATP formation. The polypeptide is Photosystem II reaction center protein T (Chlamydomonas reinhardtii (Chlamydomonas smithii)).